Here is a 151-residue protein sequence, read N- to C-terminus: Apolipoprotein A-I (151 aa).

The signal sequence occupies residues 1–18 (MKAVVLTLAVLFLTGSQA). Positions 19–24 (RHFWQQ) are excised as a propeptide. Tandem repeats lie at residues 67-88 (LKLL…EQIG) and 89-110 (PVTQ…QEMS). Residues 67–143 (LKLLDNWDTL…EVELYRQKVA (77 aa)) are 4 X approximate tandem repeats. A Methionine sulfoxide modification is found at M109. The 3; half-length repeat unit spans residues 111–121 (KDLEEVKQKVQ). Repeat unit 4 spans residues 122–143 (PYLDDFQKKWQEEVELYRQKVA).

The protein belongs to the apolipoprotein A1/A4/E family. Homodimer. Interacts with APOA1BP and CLU. Component of a sperm activating protein complex (SPAP), consisting of APOA1, an immunoglobulin heavy chain, an immunoglobulin light chain and albumin. Interacts with NDRG1. Interacts with SCGB3A2. Interacts with NAXE and YJEFN3. In terms of processing, glycosylated. Post-translationally, palmitoylated. Phosphorylation sites are present in the extracellular medium. Major protein of plasma HDL, also found in chylomicrons.

The protein localises to the secreted. Functionally, participates in the reverse transport of cholesterol from tissues to the liver for excretion by promoting cholesterol efflux from tissues and by acting as a cofactor for the lecithin cholesterol acyltransferase (LCAT). As part of the SPAP complex, activates spermatozoa motility. This chain is Apolipoprotein A-I (APOA1), found in Panthera tigris altaica (Siberian tiger).